The chain runs to 98 residues: Aspartyl/glutamyl-tRNA(Asn/Gln) amidotransferase subunit C (98 aa).

This sequence belongs to the GatC family. Heterotrimer of A, B and C subunits.

It carries out the reaction L-glutamyl-tRNA(Gln) + L-glutamine + ATP + H2O = L-glutaminyl-tRNA(Gln) + L-glutamate + ADP + phosphate + H(+). The catalysed reaction is L-aspartyl-tRNA(Asn) + L-glutamine + ATP + H2O = L-asparaginyl-tRNA(Asn) + L-glutamate + ADP + phosphate + 2 H(+). In terms of biological role, allows the formation of correctly charged Asn-tRNA(Asn) or Gln-tRNA(Gln) through the transamidation of misacylated Asp-tRNA(Asn) or Glu-tRNA(Gln) in organisms which lack either or both of asparaginyl-tRNA or glutaminyl-tRNA synthetases. The reaction takes place in the presence of glutamine and ATP through an activated phospho-Asp-tRNA(Asn) or phospho-Glu-tRNA(Gln). In Paenarthrobacter aurescens (strain TC1), this protein is Aspartyl/glutamyl-tRNA(Asn/Gln) amidotransferase subunit C.